Here is a 290-residue protein sequence, read N- to C-terminus: Agmatinase (290 aa).

The Mn(2+) site is built by His112, Asp135, His137, Asp139, Asp216, and Asp218.

Belongs to the arginase family. Agmatinase subfamily. It depends on Mn(2+) as a cofactor.

It carries out the reaction agmatine + H2O = urea + putrescine. The protein operates within amine and polyamine biosynthesis; putrescine biosynthesis via agmatine pathway; putrescine from agmatine: step 1/1. Catalyzes the formation of putrescine from agmatine. In Bacillus subtilis (strain 168), this protein is Agmatinase (speB).